We begin with the raw amino-acid sequence, 207 residues long: MNFKEKLKLYIITDRRLKPEIASVKQALEGGATSIQLRIKNAPTREMYEIGKEIRKLTNEYGALFFVDDRIDVALAVNADGVQLGPDDMPIEIAREIAPNLIIGASVYSLEEALEAEMKGADYLGAGSVFPTQTKKDVKVIGIEGLREIVNAVKIPVVAIGGINLENVREVLLTGVDGIAVVSAVMGTEDVKRATEGLRRIIEEVLG.

Residues 36–40 and Asp-68 each bind 4-amino-2-methyl-5-(diphosphooxymethyl)pyrimidine; that span reads QLRIK. The Mg(2+) site is built by Asp-69 and Asp-88. Position 106 (Ser-106) interacts with 4-amino-2-methyl-5-(diphosphooxymethyl)pyrimidine. 132–134 is a binding site for 2-[(2R,5Z)-2-carboxy-4-methylthiazol-5(2H)-ylidene]ethyl phosphate; the sequence is TQT. A 4-amino-2-methyl-5-(diphosphooxymethyl)pyrimidine-binding site is contributed by Lys-135. 2-[(2R,5Z)-2-carboxy-4-methylthiazol-5(2H)-ylidene]ethyl phosphate contacts are provided by residues Gly-162 and 182 to 183; that span reads VS.

It belongs to the thiamine-phosphate synthase family. Requires Mg(2+) as cofactor.

It carries out the reaction 2-[(2R,5Z)-2-carboxy-4-methylthiazol-5(2H)-ylidene]ethyl phosphate + 4-amino-2-methyl-5-(diphosphooxymethyl)pyrimidine + 2 H(+) = thiamine phosphate + CO2 + diphosphate. The catalysed reaction is 2-(2-carboxy-4-methylthiazol-5-yl)ethyl phosphate + 4-amino-2-methyl-5-(diphosphooxymethyl)pyrimidine + 2 H(+) = thiamine phosphate + CO2 + diphosphate. It catalyses the reaction 4-methyl-5-(2-phosphooxyethyl)-thiazole + 4-amino-2-methyl-5-(diphosphooxymethyl)pyrimidine + H(+) = thiamine phosphate + diphosphate. Its pathway is cofactor biosynthesis; thiamine diphosphate biosynthesis; thiamine phosphate from 4-amino-2-methyl-5-diphosphomethylpyrimidine and 4-methyl-5-(2-phosphoethyl)-thiazole: step 1/1. Its function is as follows. Condenses 4-methyl-5-(beta-hydroxyethyl)thiazole monophosphate (THZ-P) and 2-methyl-4-amino-5-hydroxymethyl pyrimidine pyrophosphate (HMP-PP) to form thiamine monophosphate (TMP). This Pyrococcus horikoshii (strain ATCC 700860 / DSM 12428 / JCM 9974 / NBRC 100139 / OT-3) protein is Thiamine-phosphate synthase.